We begin with the raw amino-acid sequence, 421 residues long: Tyrosine--tRNA ligase (421 aa).

Tyr-38 contributes to the L-tyrosine binding site. The 'HIGH' region signature appears at 43–52; it reads PTGDSLHIGH. Residues Tyr-169 and Gln-173 each coordinate L-tyrosine. The 'KMSKS' region motif lies at 231-235; the sequence is KFGKS. Lys-234 provides a ligand contact to ATP. In terms of domain architecture, S4 RNA-binding spans 353-419; it reads KNLVDFLVDT…GKKKYTLVHI (67 aa).

It belongs to the class-I aminoacyl-tRNA synthetase family. TyrS type 1 subfamily. As to quaternary structure, homodimer.

It is found in the cytoplasm. The enzyme catalyses tRNA(Tyr) + L-tyrosine + ATP = L-tyrosyl-tRNA(Tyr) + AMP + diphosphate + H(+). Functionally, catalyzes the attachment of tyrosine to tRNA(Tyr) in a two-step reaction: tyrosine is first activated by ATP to form Tyr-AMP and then transferred to the acceptor end of tRNA(Tyr). The protein is Tyrosine--tRNA ligase of Lactobacillus delbrueckii subsp. bulgaricus (strain ATCC 11842 / DSM 20081 / BCRC 10696 / JCM 1002 / NBRC 13953 / NCIMB 11778 / NCTC 12712 / WDCM 00102 / Lb 14).